The following is a 171-amino-acid chain: Dual specificity protein phosphatase OPG106 (171 aa).

A Tyrosine-protein phosphatase domain is found at 23 to 171; that stretch reads SPTIMTRVTN…IIEKYVIDKN (149 aa). Cysteine 110 functions as the Phosphocysteine intermediate in the catalytic mechanism.

This sequence belongs to the protein-tyrosine phosphatase family. Non-receptor class dual specificity subfamily. Homodimer.

The protein resides in the virion. It is found in the host cytoplasm. The enzyme catalyses O-phospho-L-tyrosyl-[protein] + H2O = L-tyrosyl-[protein] + phosphate. It carries out the reaction O-phospho-L-seryl-[protein] + H2O = L-seryl-[protein] + phosphate. Functionally, serine/tyrosine phosphatase which down-regulates cellular antiviral response by dephosphorylating activated host STAT1 and blocking interferon (IFN)-stimulated innate immune responses. Dephosphorylates the OPG144 protein. This is Dual specificity protein phosphatase OPG106 (OPG106) from Homo sapiens (Human).